The chain runs to 67 residues: Neurotoxin Cex10 (67 aa).

The LCN-type CS-alpha/beta domain occupies 1–65 (KDGYLVEVTG…TWPLPNKSCG (65 aa)). 4 disulfide bridges follow: Cys-11/Cys-64, Cys-15/Cys-40, Cys-24/Cys-45, and Cys-28/Cys-47. Cys-64 is subject to Cysteine amide. Positions 65-67 (GKK) are excised as a propeptide.

This sequence belongs to the long (4 C-C) scorpion toxin superfamily. Sodium channel inhibitor family. Beta subfamily. In terms of tissue distribution, expressed by the venom gland.

It is found in the secreted. Its function is as follows. Beta toxins bind voltage-independently at site-4 of sodium channels (Nav) and shift the voltage of activation toward more negative potentials thereby affecting sodium channel activation and promoting spontaneous and repetitive firing. The sequence is that of Neurotoxin Cex10 from Centruroides exilicauda (Bark scorpion).